The primary structure comprises 169 residues: Peptide methionine sulfoxide reductase MsrA (169 aa).

The active site involves cysteine 11.

Belongs to the MsrA Met sulfoxide reductase family.

The enzyme catalyses L-methionyl-[protein] + [thioredoxin]-disulfide + H2O = L-methionyl-(S)-S-oxide-[protein] + [thioredoxin]-dithiol. It catalyses the reaction [thioredoxin]-disulfide + L-methionine + H2O = L-methionine (S)-S-oxide + [thioredoxin]-dithiol. Functionally, has an important function as a repair enzyme for proteins that have been inactivated by oxidation. Catalyzes the reversible oxidation-reduction of methionine sulfoxide in proteins to methionine. The chain is Peptide methionine sulfoxide reductase MsrA from Leifsonia xyli subsp. xyli (strain CTCB07).